A 298-amino-acid chain; its full sequence is Ethanolamine ammonia-lyase small subunit (298 aa).

The adenosylcob(III)alamin site is built by V210, E231, and C261.

This sequence belongs to the EutC family. As to quaternary structure, the basic unit is a heterodimer which dimerizes to form tetramers. The heterotetramers trimerize; 6 large subunits form a core ring with 6 small subunits projecting outwards. Requires adenosylcob(III)alamin as cofactor.

The protein localises to the bacterial microcompartment. It carries out the reaction ethanolamine = acetaldehyde + NH4(+). It functions in the pathway amine and polyamine degradation; ethanolamine degradation. Catalyzes the deamination of various vicinal amino-alcohols to oxo compounds. Allows this organism to utilize ethanolamine as the sole source of nitrogen and carbon in the presence of external vitamin B12. The sequence is that of Ethanolamine ammonia-lyase small subunit from Salmonella dublin (strain CT_02021853).